Reading from the N-terminus, the 364-residue chain is Lipoyl synthase, mitochondrial (364 aa).

Positions 99, 104, 110, 130, 134, 137, and 345 each coordinate [4Fe-4S] cluster. Residues 116–334 (HSTQTATIML…EQRGNELGFL (219 aa)) form the Radical SAM core domain.

Belongs to the radical SAM superfamily. Lipoyl synthase family. The cofactor is [4Fe-4S] cluster.

It is found in the mitochondrion. The catalysed reaction is [[Fe-S] cluster scaffold protein carrying a second [4Fe-4S](2+) cluster] + N(6)-octanoyl-L-lysyl-[protein] + 2 oxidized [2Fe-2S]-[ferredoxin] + 2 S-adenosyl-L-methionine + 4 H(+) = [[Fe-S] cluster scaffold protein] + N(6)-[(R)-dihydrolipoyl]-L-lysyl-[protein] + 4 Fe(3+) + 2 hydrogen sulfide + 2 5'-deoxyadenosine + 2 L-methionine + 2 reduced [2Fe-2S]-[ferredoxin]. It functions in the pathway protein modification; protein lipoylation via endogenous pathway; protein N(6)-(lipoyl)lysine from octanoyl-[acyl-carrier-protein]: step 2/2. Functionally, catalyzes the radical-mediated insertion of two sulfur atoms into the C-6 and C-8 positions of the octanoyl moiety bound to the lipoyl domains of lipoate-dependent enzymes, thereby converting the octanoylated domains into lipoylated derivatives. The sequence is that of Lipoyl synthase, mitochondrial from Drosophila mojavensis (Fruit fly).